Consider the following 151-residue polypeptide: Histone H2B.1 (151 aa).

2 stretches are compositionally biased toward basic and acidic residues: residues 1 to 28 (MAPKAEKKPAAKKPAEEEPATEKVEKAP) and 36 to 51 (EKRLPAGKSKEGGEGK). The disordered stretch occupies residues 1–58 (MAPKAEKKPAAKKPAEEEPATEKVEKAPAGKKPKAEKRLPAGKSKEGGEGKKGKKKAK). 2 positions are modified to N6-acetyllysine: K7 and K37. K147 is covalently cross-linked (Glycyl lysine isopeptide (Lys-Gly) (interchain with G-Cter in ubiquitin)).

The protein belongs to the histone H2B family. In terms of assembly, the nucleosome is a histone octamer containing two molecules each of H2A, H2B, H3 and H4 assembled in one H3-H4 heterotetramer and two H2A-H2B heterodimers. The octamer wraps approximately 147 bp of DNA. Can be acetylated to form H2BK6ac and H2BK33ac. In terms of processing, monoubiquitinated to form H2BK143ub1; may give a specific tag for epigenetic transcriptional activation.

It is found in the nucleus. The protein localises to the chromosome. Core component of nucleosome. Nucleosomes wrap and compact DNA into chromatin, limiting DNA accessibility to the cellular machineries which require DNA as a template. Histones thereby play a central role in transcription regulation, DNA repair, DNA replication and chromosomal stability. DNA accessibility is regulated via a complex set of post-translational modifications of histones, also called histone code, and nucleosome remodeling. The chain is Histone H2B.1 from Zea mays (Maize).